The sequence spans 540 residues: (13S,14R)-13-O-acetyl-1-hydroxy-N-methylcanadine 8-hydroxylase CYP82X1 (540 aa).

Residues 15 to 35 form a helical membrane-spanning segment; it reads FSIILVTTVSIVLLYSVFFWV. C483 contacts heme.

Belongs to the cytochrome P450 family. The cofactor is heme. Highly expressed in capsules. Expressed is stems.

It is found in the membrane. The enzyme catalyses (13S,14R)-13-O-acetyl-1-hydroxy-N-methylcanadine + reduced [NADPH--hemoprotein reductase] + O2 = (13S,14R)-13-O-acetyl-1,8-dihydroxy-N-methylcanadine + oxidized [NADPH--hemoprotein reductase] + H2O + H(+). Its pathway is alkaloid biosynthesis. In terms of biological role, cytochrome P450 involved in the biosynthesis of the benzylisoquinoline alkaloid noscapine. Converts (13S,14R)-13-O-acetyl-1-hydroxy-N-methylcanadine to (13S,14R)-13-O-acetyl-1,8-dihydroxy-N-methylcanadine. In Papaver somniferum (Opium poppy), this protein is (13S,14R)-13-O-acetyl-1-hydroxy-N-methylcanadine 8-hydroxylase CYP82X1.